A 290-amino-acid polypeptide reads, in one-letter code: Acetyl-coenzyme A carboxylase carboxyl transferase subunit beta (290 aa).

The 264-residue stretch at 27–290 folds into the CoA carboxyltransferase N-terminal domain; the sequence is LWIKCPSCEA…LTRQPADAVA (264 aa). Positions 31, 34, 50, and 53 each coordinate Zn(2+). The C4-type zinc-finger motif lies at 31–53; that stretch reads CPSCEAVLYRNDVEANLHVCPKC.

Belongs to the AccD/PCCB family. In terms of assembly, acetyl-CoA carboxylase is a heterohexamer composed of biotin carboxyl carrier protein (AccB), biotin carboxylase (AccC) and two subunits each of ACCase subunit alpha (AccA) and ACCase subunit beta (AccD). The cofactor is Zn(2+).

Its subcellular location is the cytoplasm. It catalyses the reaction N(6)-carboxybiotinyl-L-lysyl-[protein] + acetyl-CoA = N(6)-biotinyl-L-lysyl-[protein] + malonyl-CoA. It functions in the pathway lipid metabolism; malonyl-CoA biosynthesis; malonyl-CoA from acetyl-CoA: step 1/1. Component of the acetyl coenzyme A carboxylase (ACC) complex. Biotin carboxylase (BC) catalyzes the carboxylation of biotin on its carrier protein (BCCP) and then the CO(2) group is transferred by the transcarboxylase to acetyl-CoA to form malonyl-CoA. In Paraburkholderia phymatum (strain DSM 17167 / CIP 108236 / LMG 21445 / STM815) (Burkholderia phymatum), this protein is Acetyl-coenzyme A carboxylase carboxyl transferase subunit beta.